A 281-amino-acid polypeptide reads, in one-letter code: Undecaprenyl-diphosphatase (281 aa).

7 consecutive transmembrane segments (helical) span residues isoleucine 4–isoleucine 24, alanine 46–phenylalanine 63, phenylalanine 83–lysine 103, valine 108–tryptophan 128, alanine 187–tyrosine 207, glutamate 222–valine 242, and phenylalanine 257–isoleucine 277.

The protein belongs to the UppP family.

It is found in the cell inner membrane. The catalysed reaction is di-trans,octa-cis-undecaprenyl diphosphate + H2O = di-trans,octa-cis-undecaprenyl phosphate + phosphate + H(+). Its function is as follows. Catalyzes the dephosphorylation of undecaprenyl diphosphate (UPP). Confers resistance to bacitracin. The sequence is that of Undecaprenyl-diphosphatase from Polynucleobacter necessarius subsp. necessarius (strain STIR1).